The following is a 157-amino-acid chain: Protein PEROXIN-4 (157 aa).

Residues 3-153 (ASRARLFKEY…AQMYTRLAAM (151 aa)) enclose the UBC core domain. The active-site Glycyl thioester intermediate is the Cys-90.

The protein belongs to the ubiquitin-conjugating enzyme family. As to quaternary structure, interacts with PEX22.

Its subcellular location is the peroxisome membrane. It carries out the reaction S-ubiquitinyl-[E1 ubiquitin-activating enzyme]-L-cysteine + [E2 ubiquitin-conjugating enzyme]-L-cysteine = [E1 ubiquitin-activating enzyme]-L-cysteine + S-ubiquitinyl-[E2 ubiquitin-conjugating enzyme]-L-cysteine.. It functions in the pathway protein modification; protein ubiquitination. Required for peroxisome biogenesis. Necessary for the developmental elimination of obsolete peroxisome matrix proteins. May be involved in the ubiquitination of PEX5, targeting it for recycling. Accepts the ubiquitin from the E1 complex and catalyzes its covalent attachment to other proteins. This is Protein PEROXIN-4 (PEX4) from Arabidopsis thaliana (Mouse-ear cress).